A 267-amino-acid chain; its full sequence is Regulatory protein RecX (267 aa).

The protein belongs to the RecX family.

It localises to the cytoplasm. Modulates RecA activity. The chain is Regulatory protein RecX from Staphylococcus haemolyticus (strain JCSC1435).